The following is a 140-amino-acid chain: MTRRSKMRDLVFKVIFQNEFRNDSIETVLEDILHISKSGLMKADITRYVKGIYENLPSIDEKISLCLENWSLQRLSLVDRSILRLATYELLYESDVPIEVTLDEAVEIAKKYGTENSSKFVNGVLDKVAKSFAPEEKRYI.

The protein belongs to the NusB family.

Involved in transcription antitermination. Required for transcription of ribosomal RNA (rRNA) genes. Binds specifically to the boxA antiterminator sequence of the ribosomal RNA (rrn) operons. The chain is Transcription antitermination protein NusB from Pseudothermotoga lettingae (strain ATCC BAA-301 / DSM 14385 / NBRC 107922 / TMO) (Thermotoga lettingae).